A 127-amino-acid polypeptide reads, in one-letter code: Small ribosomal subunit protein uS11 (127 aa).

This sequence belongs to the universal ribosomal protein uS11 family. Part of the 30S ribosomal subunit. Interacts with proteins S7 and S18. Binds to IF-3.

Located on the platform of the 30S subunit, it bridges several disparate RNA helices of the 16S rRNA. Forms part of the Shine-Dalgarno cleft in the 70S ribosome. This chain is Small ribosomal subunit protein uS11, found in Pelodictyon phaeoclathratiforme (strain DSM 5477 / BU-1).